A 48-amino-acid chain; its full sequence is Small, acid-soluble spore protein P (48 aa).

Residues 1–12 (MTNKNTSKDMHK) show a composition bias toward basic and acidic residues. The disordered stretch occupies residues 1-48 (MTNKNTSKDMHKNAPKGHNPGQPEPLSGSKKVKNRNHTRQKHNTSHDM). Residues 30-48 (KKVKNRNHTRQKHNTSHDM) are compositionally biased toward basic residues.

This sequence belongs to the SspP family.

The protein resides in the spore core. The polypeptide is Small, acid-soluble spore protein P (Bacillus velezensis (strain DSM 23117 / BGSC 10A6 / LMG 26770 / FZB42) (Bacillus amyloliquefaciens subsp. plantarum)).